We begin with the raw amino-acid sequence, 353 residues long: Photosystem II protein D1 (353 aa).

Thr-2 carries the post-translational modification N-acetylthreonine. Thr-2 carries the phosphothreonine modification. 3 helical membrane passes run Tyr-29–Ser-46, His-118–Leu-133, and Trp-142–Ala-156. His-118 serves as a coordination point for chlorophyll a. Tyr-126 provides a ligand contact to pheophytin a. Residues Asp-170 and Glu-189 each coordinate [CaMn4O5] cluster. The chain crosses the membrane as a helical span at residues Phe-197–Leu-218. His-198 provides a ligand contact to chlorophyll a. Residues His-215 and Ser-264 to Phe-265 contribute to the a quinone site. His-215 contacts Fe cation. Position 272 (His-272) interacts with Fe cation. The helical transmembrane segment at Phe-274 to Leu-288 threads the bilayer. His-332, Glu-333, Asp-342, and Ala-344 together coordinate [CaMn4O5] cluster. Residues Thr-345–Ala-353 constitute a propeptide that is removed on maturation.

Belongs to the reaction center PufL/M/PsbA/D family. PSII is composed of 1 copy each of membrane proteins PsbA, PsbB, PsbC, PsbD, PsbE, PsbF, PsbH, PsbI, PsbJ, PsbK, PsbL, PsbM, PsbT, PsbX, PsbY, PsbZ, Psb30/Ycf12, at least 3 peripheral proteins of the oxygen-evolving complex and a large number of cofactors. It forms dimeric complexes. It depends on The D1/D2 heterodimer binds P680, chlorophylls that are the primary electron donor of PSII, and subsequent electron acceptors. It shares a non-heme iron and each subunit binds pheophytin, quinone, additional chlorophylls, carotenoids and lipids. D1 provides most of the ligands for the Mn4-Ca-O5 cluster of the oxygen-evolving complex (OEC). There is also a Cl(-1) ion associated with D1 and D2, which is required for oxygen evolution. The PSII complex binds additional chlorophylls, carotenoids and specific lipids. as a cofactor. In terms of processing, tyr-161 forms a radical intermediate that is referred to as redox-active TyrZ, YZ or Y-Z. Post-translationally, C-terminally processed by CTPA; processing is essential to allow assembly of the oxygen-evolving complex and thus photosynthetic growth.

Its subcellular location is the plastid membrane. The enzyme catalyses 2 a plastoquinone + 4 hnu + 2 H2O = 2 a plastoquinol + O2. In terms of biological role, photosystem II (PSII) is a light-driven water:plastoquinone oxidoreductase that uses light energy to abstract electrons from H(2)O, generating O(2) and a proton gradient subsequently used for ATP formation. It consists of a core antenna complex that captures photons, and an electron transfer chain that converts photonic excitation into a charge separation. The D1/D2 (PsbA/PsbD) reaction center heterodimer binds P680, the primary electron donor of PSII as well as several subsequent electron acceptors. In Cuscuta gronovii (Common dodder), this protein is Photosystem II protein D1.